The following is a 444-amino-acid chain: Phosphoglucosamine mutase (444 aa).

Serine 102 acts as the Phosphoserine intermediate in catalysis. 4 residues coordinate Mg(2+): serine 102, aspartate 241, aspartate 243, and aspartate 245. At serine 102 the chain carries Phosphoserine.

This sequence belongs to the phosphohexose mutase family. Mg(2+) is required as a cofactor. In terms of processing, activated by phosphorylation.

The enzyme catalyses alpha-D-glucosamine 1-phosphate = D-glucosamine 6-phosphate. Its function is as follows. Catalyzes the conversion of glucosamine-6-phosphate to glucosamine-1-phosphate. This Histophilus somni (strain 2336) (Haemophilus somnus) protein is Phosphoglucosamine mutase.